The primary structure comprises 255 residues: Triosephosphate isomerase (255 aa).

9–11 (NWK) contributes to the substrate binding site. Residue histidine 95 is the Electrophile of the active site. Glutamate 167 (proton acceptor) is an active-site residue. Residues glycine 173, serine 212, and 233–234 (GG) contribute to the substrate site.

Belongs to the triosephosphate isomerase family. In terms of assembly, homodimer.

It localises to the cytoplasm. It carries out the reaction D-glyceraldehyde 3-phosphate = dihydroxyacetone phosphate. It participates in carbohydrate biosynthesis; gluconeogenesis. The protein operates within carbohydrate degradation; glycolysis; D-glyceraldehyde 3-phosphate from glycerone phosphate: step 1/1. Functionally, involved in the gluconeogenesis. Catalyzes stereospecifically the conversion of dihydroxyacetone phosphate (DHAP) to D-glyceraldehyde-3-phosphate (G3P). This is Triosephosphate isomerase from Salmonella agona (strain SL483).